Consider the following 61-residue polypeptide: Probradykinin-1 (61 aa).

Positions 1 to 22 (MSFLKKSLFLVLFLGLVSFSIC) are cleaved as a signal peptide. A propeptide spanning residues 23-48 (EEEKRETEEEENKDETEEQSEEKKRF) is cleaved from the precursor. The disordered stretch occupies residues 24 to 61 (EEKRETEEEENKDETEEQSEEKKRFEPVPPGFTPFRLT). Positions 30–42 (EEEENKDETEEQS) are enriched in acidic residues.

The protein belongs to the frog skin active peptide (FSAP) family. Bradykinin-related peptide subfamily. As to expression, expressed by the skin glands.

The protein resides in the secreted. May produce in vitro relaxation of rat arterial smooth muscle and constriction of intestinal smooth muscle. May target bradykinin receptors (BDKRB). The sequence is that of Probradykinin-1 from Pithecopus azureus (Orange-legged monkey tree frog).